A 130-amino-acid chain; its full sequence is S-protein homolog 22 (130 aa).

A signal peptide spans 1–21 (MKYFTIFFIFFSLCMFGHVSG).

Belongs to the plant self-incompatibility (S1) protein family.

The protein resides in the secreted. This is S-protein homolog 22 from Arabidopsis thaliana (Mouse-ear cress).